The sequence spans 383 residues: Homeobox protein knotted-1-like 5 (383 aa).

Disordered regions lie at residues 1 to 35 (MSFN…HFSE) and 52 to 73 (TTAD…ADTN). The ELK domain occupies 281 to 301 (ELKHELKQGFKEKIVDIREEI). The segment at residues 302–365 (MRKRRAGKLP…NQRKRNWNSN (64 aa)) is a DNA-binding region (homeobox; TALE-type). The tract at residues 361-383 (NWNSNSSTSSTLTKNKRKRTGKS) is disordered. Over residues 362 to 373 (WNSNSSTSSTLT) the composition is skewed to low complexity. Residues 374 to 383 (KNKRKRTGKS) show a composition bias toward basic residues.

Belongs to the TALE/KNOX homeobox family. May form heterodimeric complex with the TALE/BELL protein BEL1, BLH1 and BLH2. Interacts with OFP1, OFP2, OFP3 and OFP4.

The protein localises to the nucleus. The protein is Homeobox protein knotted-1-like 5 (KNAT5) of Arabidopsis thaliana (Mouse-ear cress).